We begin with the raw amino-acid sequence, 342 residues long: Farnesyl pyrophosphate synthase 1 (342 aa).

Isopentenyl diphosphate-binding residues include K47, R50, and Q86. Residues D93 and D97 each coordinate Mg(2+). R102 contributes to the dimethylallyl diphosphate binding site. Residue R103 coordinates isopentenyl diphosphate. 5 residues coordinate dimethylallyl diphosphate: K190, T191, Q229, K246, and K255.

This sequence belongs to the FPP/GGPP synthase family. Mg(2+) is required as a cofactor.

The protein localises to the cytoplasm. It catalyses the reaction isopentenyl diphosphate + dimethylallyl diphosphate = (2E)-geranyl diphosphate + diphosphate. The enzyme catalyses isopentenyl diphosphate + (2E)-geranyl diphosphate = (2E,6E)-farnesyl diphosphate + diphosphate. Its pathway is isoprenoid biosynthesis; farnesyl diphosphate biosynthesis; farnesyl diphosphate from geranyl diphosphate and isopentenyl diphosphate: step 1/1. It functions in the pathway isoprenoid biosynthesis; geranyl diphosphate biosynthesis; geranyl diphosphate from dimethylallyl diphosphate and isopentenyl diphosphate: step 1/1. Its function is as follows. Catalyzes the sequential condensation of isopentenyl pyrophosphate with the allylic pyrophosphates, dimethylallyl pyrophosphate, and then with the resultant geranylpyrophosphate to the ultimate product farnesyl pyrophosphate. The chain is Farnesyl pyrophosphate synthase 1 (FPS1) from Lupinus albus (White lupine).